The primary structure comprises 267 residues: GTP cyclohydrolase MptA (267 aa).

It belongs to the GTP cyclohydrolase IV family. In terms of assembly, homodimer. Requires Fe(2+) as cofactor.

The catalysed reaction is GTP + H2O = 7,8-dihydroneopterin 2',3'-cyclic phosphate + formate + diphosphate + H(+). The protein operates within cofactor biosynthesis; 5,6,7,8-tetrahydromethanopterin biosynthesis. In terms of biological role, converts GTP to 7,8-dihydro-D-neopterin 2',3'-cyclic phosphate, the first intermediate in the biosynthesis of coenzyme methanopterin. The sequence is that of GTP cyclohydrolase MptA from Thermococcus kodakarensis (strain ATCC BAA-918 / JCM 12380 / KOD1) (Pyrococcus kodakaraensis (strain KOD1)).